Consider the following 453-residue polypeptide: UPF0210 protein Pcar_2119 (453 aa).

Belongs to the UPF0210 family. Homodimer.

The chain is UPF0210 protein Pcar_2119 from Syntrophotalea carbinolica (strain DSM 2380 / NBRC 103641 / GraBd1) (Pelobacter carbinolicus).